The primary structure comprises 399 residues: Phosphoglycerate kinase (399 aa).

Substrate contacts are provided by residues 22–24 (DFN), arginine 38, 61–64 (HLGR), arginine 120, and arginine 153. ATP is bound by residues lysine 204, glutamate 326, and 352–355 (GGDT).

This sequence belongs to the phosphoglycerate kinase family. Monomer.

The protein localises to the cytoplasm. It catalyses the reaction (2R)-3-phosphoglycerate + ATP = (2R)-3-phospho-glyceroyl phosphate + ADP. It participates in carbohydrate degradation; glycolysis; pyruvate from D-glyceraldehyde 3-phosphate: step 2/5. This is Phosphoglycerate kinase from Geobacter sp. (strain M21).